Consider the following 828-residue polypeptide: Cadherin-22 (828 aa).

Residues 1–34 (MRPRPEGRGLRAGVALSPALLLLLLLPPPPTLLG) form the signal peptide. The Extracellular portion of the chain corresponds to 36-624 (LWAAGTPSPS…AFVMAASLSP (589 aa)). Cadherin domains are found at residues 64–168 (WVWN…EPRF), 169–277 (LHGP…PPRF), 278–394 (PQKM…PPEF), 395–498 (RPPS…NPPE), and 499–616 (LATP…TTAF). N162 carries N-linked (GlcNAc...) asparagine glycosylation. 2 N-linked (GlcNAc...) asparagine glycosylation sites follow: N466 and N612. Residues 625 to 645 (GALIALLVCVLILVVLVLLIL) form a helical membrane-spanning segment. The Cytoplasmic portion of the chain corresponds to 646 to 828 (TLRRHHKSHL…HRGDDEAQAS (183 aa)). The segment covering 702-719 (GGGSAGGGAGGGSGGGAG) has biased composition (gly residues). The segment at 702-745 (GGGSAGGGAGGGSGGGAGSPPQAHLPSERHSLPQGPPSPEPDFS) is disordered.

The protein resides in the cell membrane. Its function is as follows. Cadherins are calcium-dependent cell adhesion proteins. They preferentially interact with themselves in a homophilic manner in connecting cells; cadherins may thus contribute to the sorting of heterogeneous cell types. PB-cadherins may have a role in the morphological organization of pituitary gland and brain tissues. This chain is Cadherin-22 (CDH22), found in Homo sapiens (Human).